A 398-amino-acid chain; its full sequence is Argininosuccinate synthase (398 aa).

8–16 (AYSGGLDTS) serves as a coordination point for ATP. Tyr-87 lines the L-citrulline pocket. Gly-117 serves as a coordination point for ATP. Thr-119, Asn-123, and Asp-124 together coordinate L-aspartate. An L-citrulline-binding site is contributed by Asn-123. The L-citrulline site is built by Arg-127, Ser-175, Glu-259, and Tyr-271.

The protein belongs to the argininosuccinate synthase family. Type 1 subfamily. In terms of assembly, homotetramer.

It is found in the cytoplasm. The enzyme catalyses L-citrulline + L-aspartate + ATP = 2-(N(omega)-L-arginino)succinate + AMP + diphosphate + H(+). Its pathway is amino-acid biosynthesis; L-arginine biosynthesis; L-arginine from L-ornithine and carbamoyl phosphate: step 2/3. The polypeptide is Argininosuccinate synthase (Corynebacterium kroppenstedtii (strain DSM 44385 / JCM 11950 / CIP 105744 / CCUG 35717)).